The primary structure comprises 367 residues: Gelsolin-like protein 1 (367 aa).

The tract at residues Met-1–Glu-185 is actin binding. Gelsolin-like repeat units lie at residues Asn-56 to Arg-141 and Gln-179 to Gln-225. The actin-actin interfilament contact point stretch occupies residues Asp-106–Gly-109. Residues Val-186–Ala-295 are actin binding, Actin-severing. Residues Pro-235 to Leu-257 form a disordered region. The stretch at Lys-287–Gly-322 is one Gelsolin-like 3 repeat. The segment at Val-296 to Ala-366 is actin-severing, Ca-sensitive.

Belongs to the villin/gelsolin family. Interacts with actin monomers and filaments. As to expression, expressed in circular and longitudinal muscle, pseudohearts, pharynx and gizzard. Also expressed in male germ cells at the proximal pole of primary spermatocytes in 16 cell-stage morulae, and in the distal parts of the spermatocytes in 32 and 64 cell-stage morulae. In the spermatids of the 128 cell-stage morulae it is expressed at the proximal pole of the elongated nucleus and the distal pole near the base of the flagellae.

It localises to the cytoplasm. It is found in the cytoskeleton. Calcium-regulated protein that binds to the plus (or barbed) ends of actin monomers or filaments, preventing monomer exchange (end-blocking or capping). Can promote the assembly of monomers into filaments (nucleation) as well as sever existing filaments. This is Gelsolin-like protein 1 from Lumbricus terrestris (Common earthworm).